A 1727-amino-acid chain; its full sequence is Gag-Pol polyprotein (1727 aa).

Gly2 is lipidated: N-myristoyl glycine; by host. The PTAP/PSAP motif signature appears at Ser109–Leu112. The LYPX(n)L motif signature appears at Val128–Glu132. 4 disordered regions span residues Leu137–Trp221, Lys302–Phe322, Lys443–Lys471, and Asp515–Pro547. Over residues Leu143 to Leu165 the composition is skewed to pro residues. The short motif at Pro154–Tyr157 is the PPXY motif element. Positions Ser166 to Pro187 are enriched in low complexity. Positions Pro188–Thr204 are enriched in pro residues. Basic and acidic residues-rich tracts occupy residues Lys443–Arg465 and Asp515–Lys525. Residues Asp501–Lys518 form a CCHC-type zinc finger. One can recognise a Peptidase A2 domain in the interval Thr560 to Leu630. The active-site Protease; shared with dimeric partner is the Asp565. Positions Lys736–Leu929 constitute a Reverse transcriptase domain. Mg(2+) is bound by residues Asp806, Asp880, Asp881, Asp1181, Glu1219, Asp1240, and Asp1310. The RNase H type-1 domain maps to Pro1172 to Met1318. Residues His1383 to Cys1421 form an HHCC-type zinc finger. The region spanning Arg1438–Pro1596 is the Integrase catalytic domain. Residues Asp1449 and Asp1508 each contribute to the Mg(2+) site.

It belongs to the retroviral Pol polyprotein family. Homohexamer; further associates as homomultimer. The virus core is composed of a lattice formed from hexagonal rings, each containing six capsid monomers. As to quaternary structure, interacts (via PPXY motif) with host NEDD4. Interacts (via PSAP motif) with host TSG101. Interacts (via LYPX(n)L motif) with host PDCD6IP. In terms of assembly, the reverse transcriptase is a monomer (Potential). Interacts (via RNase domains) with host release factor ETF1; this interaction is essential for translational readthrough of amber codon between viral gag and pol genes, as well as for viral replication. Homodimer. The cofactor is Mg(2+). Specific enzymatic cleavages by the viral protease yield mature proteins. The protease is released by autocatalytic cleavage. The polyprotein is cleaved during and after budding, this process is termed maturation. Post-translationally, phosphorylated on serine residues.

Its subcellular location is the virion. The protein localises to the host cell membrane. The protein resides in the host late endosome membrane. It localises to the host endosome. It is found in the host multivesicular body. Its subcellular location is the host cytoplasm. The catalysed reaction is DNA(n) + a 2'-deoxyribonucleoside 5'-triphosphate = DNA(n+1) + diphosphate. It carries out the reaction Endonucleolytic cleavage to 5'-phosphomonoester.. Most efficiently inhibited by Amprenavir, which is able to block Gag-Pol processing in infected cells. In terms of biological role, plays a role in budding and is processed by the viral protease during virion maturation outside the cell. During budding, it recruits, in a PPXY-dependent or independent manner, Nedd4-like ubiquitin ligases that conjugate ubiquitin molecules to Gag-Pol, or to Gag-Pol binding host factors. Interaction with HECT ubiquitin ligases probably links the viral protein to the host ESCRT pathway and facilitates release. Targets Gag and gag-pol polyproteins to the plasma membrane via a multipartite membrane binding signal, that includes its myristoylated N-terminus. Also mediates nuclear localization of the pre-integration complex. Its function is as follows. Constituent of the pre-integration complex (PIC) which tethers the latter to mitotic chromosomes. This allows the integration of the viral genome into the host DNA. Functionally, forms the spherical core of the virion that encapsulates the genomic RNA-nucleocapsid complex. In terms of biological role, involved in the packaging and encapsidation of two copies of the genome. Binds with high affinity to conserved UCUG elements within the packaging signal, located near the 5'-end of the genome. This binding is dependent on genome dimerization. Acts as a nucleic acid chaperone which is involved in rearrangement of nucleic acid secondary structures during gRNA retrotranscription. The aspartyl protease mediates proteolytic cleavages of Gag and Gag-Pol polyproteins during or shortly after the release of the virion from the plasma membrane. Cleavages take place as an ordered, step-wise cascade to yield mature proteins. This process is called maturation. Displays maximal activity during the budding process just prior to particle release from the cell. Its function is as follows. RT is a multifunctional enzyme that converts the viral dimeric RNA genome into dsDNA in the cytoplasm, shortly after virus entry into the cell. This enzyme displays a DNA polymerase activity that can copy either DNA or RNA templates, and a ribonuclease H (RNase H) activity that cleaves the RNA strand of RNA-DNA heteroduplexes in a partially processive 3' to 5' endonucleasic mode. Conversion of viral genomic RNA into dsDNA requires many steps. A tRNA binds to the primer-binding site (PBS) situated at the 5' end of the viral RNA. RT uses the 3' end of the tRNA primer to perform a short round of RNA-dependent minus-strand DNA synthesis. The reading proceeds through the U5 region and ends after the repeated (R) region which is present at both ends of viral RNA. The portion of the RNA-DNA heteroduplex is digested by the RNase H, resulting in a ssDNA product attached to the tRNA primer. This ssDNA/tRNA hybridizes with the identical R region situated at the 3' end of viral RNA. This template exchange, known as minus-strand DNA strong stop transfer, can be either intra- or intermolecular. RT uses the 3' end of this newly synthesized short ssDNA to perform the RNA-dependent minus-strand DNA synthesis of the whole template. RNase H digests the RNA template except for a polypurine tract (PPT) situated at the 5' end of the genome. It is not clear if both polymerase and RNase H activities are simultaneous. RNase H probably can proceed both in a polymerase-dependent (RNA cut into small fragments by the same RT performing DNA synthesis) and a polymerase-independent mode (cleavage of remaining RNA fragments by free RTs). Secondly, RT performs DNA-directed plus-strand DNA synthesis using the PPT that has not been removed by RNase H as primers. PPT and tRNA primers are then removed by RNase H. The 3' and 5' ssDNA PBS regions hybridize to form a circular dsDNA intermediate. Strand displacement synthesis by RT to the PBS and PPT ends produces a blunt ended, linear dsDNA copy of the viral genome that includes long terminal repeats (LTRs) at both ends. Functionally, catalyzes viral DNA integration into the host chromosome, by performing a series of DNA cutting and joining reactions. This enzyme activity takes place after virion entry into a cell and reverse transcription of the RNA genome in dsDNA. The first step in the integration process is 3' processing. This step requires a complex comprising the viral genome, matrix protein and integrase. This complex is called the pre-integration complex (PIC). The integrase protein removes 2 nucleotides from each 3' end of the viral DNA, leaving recessed CA OH's at the 3' ends. In the second step that requires cell division, the PIC enters cell nucleus. In the third step, termed strand transfer, the integrase protein joins the previously processed 3' ends to the 5' ends of strands of target cellular DNA at the site of integration. The last step is viral DNA integration into host chromosome. The polypeptide is Gag-Pol polyprotein (pol) (Papio (baboons)).